Consider the following 444-residue polypeptide: Cytokine receptor-like factor 3 (444 aa).

Residues 1 to 65 (MSIEAEALLQ…QELQTAVSRL (65 aa)) are a coiled coil. The Fibronectin type-III domain maps to 177-270 (PPVQIEELVE…PQTGYTTLAP (94 aa)).

It belongs to the cytokine receptor-like factor 3 family.

The protein resides in the cytoplasm. Its function is as follows. May play a role in the negative regulation of cell cycle progression. This chain is Cytokine receptor-like factor 3 (crlf3), found in Danio rerio (Zebrafish).